A 483-amino-acid polypeptide reads, in one-letter code: GTPase Der (483 aa).

2 EngA-type G domains span residues 3-167 and 212-387; these read FTLA…GEER and LRIA…EIWN. GTP contacts are provided by residues 9 to 16, 56 to 60, 119 to 122, 218 to 225, 265 to 269, and 330 to 333; these read GRPNVGKS, DTAGL, NKAE, GRPNAGKS, DTAGM, and NKWD. Residues 388 to 472 form the KH-like domain; that stretch reads RRISTGRLNR…PIRLSLRTSD (85 aa).

The protein belongs to the TRAFAC class TrmE-Era-EngA-EngB-Septin-like GTPase superfamily. EngA (Der) GTPase family. Associates with the 50S ribosomal subunit.

Its function is as follows. GTPase that plays an essential role in the late steps of ribosome biogenesis. The polypeptide is GTPase Der (Brucella suis (strain ATCC 23445 / NCTC 10510)).